The following is a 617-amino-acid chain: UvrABC system protein C (617 aa).

One can recognise a GIY-YIG domain in the interval 22-100 (KLPGVYRFFD…IKALSPKYNI (79 aa)). The 36-residue stretch at 209-244 (DELTRTLQHKMQTAAANLQFEEAARYRDQIQALGII) folds into the UVR domain.

It belongs to the UvrC family. Interacts with UvrB in an incision complex.

The protein resides in the cytoplasm. Functionally, the UvrABC repair system catalyzes the recognition and processing of DNA lesions. UvrC both incises the 5' and 3' sides of the lesion. The N-terminal half is responsible for the 3' incision and the C-terminal half is responsible for the 5' incision. This is UvrABC system protein C from Neisseria gonorrhoeae (strain ATCC 700825 / FA 1090).